A 72-amino-acid polypeptide reads, in one-letter code: MKVLLVRLIKGYKIFISPILPPSCRFQPTCSEYAMEAIERFGIFKGTAMAVMRILRCHPFHPGGYDPVPPKK.

It belongs to the UPF0161 family.

The protein resides in the cell inner membrane. Functionally, could be involved in insertion of integral membrane proteins into the membrane. This chain is Putative membrane protein insertion efficiency factor, found in Trichodesmium erythraeum (strain IMS101).